Consider the following 703-residue polypeptide: WPP domain-interacting tail-anchored protein 1 (703 aa).

Over residues 1–12 (METETEHDRTVS) the composition is skewed to basic and acidic residues. 2 disordered regions span residues 1–27 (METE…SSTK) and 86–107 (FVSK…DDDS). A compositionally biased stretch (acidic residues) spans 92-107 (EDEEEPSSNVDDDDDS). The stretch at 118 to 183 (SSILNSEVKE…MEQVVEMKKQ (66 aa)) forms a coiled coil. Residues 189-208 (RLSSGLDEQGSWSGGQTSVS) are disordered. Positions 198-208 (GSWSGGQTSVS) are enriched in polar residues. Coiled coils occupy residues 236–265 (LEKS…MKLY), 318–461 (KRED…RDKG), and 500–604 (STVS…SREN). The helical transmembrane segment at 679–699 (FKHILVAILVILISSIAYVIS) threads the bilayer.

Homodimer. Component of Ran complexes at least composed of WIT1 or WIT2, RANGAP1 or RANGAP2, and WIP1 or WIP2 or WIP3. Interacts with WIP2, WPP1/MAF1, WPP2/MAF2, RANGAP1 and RANGAP2. Component of a ternary complex composed of WPP1, HSP70-1 and WIT1. Interacts with KAKU1. Interacts with WIP1. Ubiquitous.

The protein resides in the nucleus envelope. It is found in the nucleus membrane. Its function is as follows. Together with WIT2, required for the nuclear envelope docking of RANGAP proteins in root tips. This is WPP domain-interacting tail-anchored protein 1 (WIT1) from Arabidopsis thaliana (Mouse-ear cress).